Reading from the N-terminus, the 555-residue chain is Formate--tetrahydrofolate ligase (555 aa).

Residue 64 to 71 (TKAGIGKT) coordinates ATP.

The protein belongs to the formate--tetrahydrofolate ligase family.

The enzyme catalyses (6S)-5,6,7,8-tetrahydrofolate + formate + ATP = (6R)-10-formyltetrahydrofolate + ADP + phosphate. Its pathway is one-carbon metabolism; tetrahydrofolate interconversion. In Bacteroides fragilis (strain ATCC 25285 / DSM 2151 / CCUG 4856 / JCM 11019 / LMG 10263 / NCTC 9343 / Onslow / VPI 2553 / EN-2), this protein is Formate--tetrahydrofolate ligase.